The following is a 697-amino-acid chain: MEIEPVVRISFNGNNNQNNNNNNNNNTNNNSNNNNNNNNSSNINSTNKPSVKKPINQKMISNINNQKSPNPLNSSVDDNNNTNNNNNSNSNGTDEDIIKLARDLTNTFGILLGDSDQPSQFSDVIFKVGDRKFFASKIMLVARSEYFKAMFTGSMKESSIKEITLEGVDPDVFFTVLKYICIGILDLDYDHRMVSSIYQYCDLLGLQRGKELSLATMGKIAQMYLEKPDVESALFLWDSLNQSAIPVESVHPHLRAFVLQYASISLHCDAFYSISLTTLVQMLRNDGLRMEELDILDCVIDWCRENSQASIQQQQQQQQQQLQSANGASGKSHGKRSSSSHLKKHDGDGGSDGSCSSRCSSRRNSLSLKDHHRQHIGNGGGGGGHYNNNDCHSDTEETYSDIDDEEHRNGGGGVGDDFENDSEDGDDDDEDDDEDDDFTDDDDKDDSANDDYEYSTNKDDLDIIEDWDTTIDKNLLDEVLPLIRWENMNIGEAFERLDNLKIIPDKEISNLLRHILKSNRGESFSFLGYHYRRPRNNRKRPYPIEFLLGITQPFDSNVTNEIIPLNSFSSEFGQSTNQFLYRIKKDIKLPANLERFSFKDREFFVQLKEREKGQLAVYLAFGSKLTKPLAISVLASVIGFRFQDSIEFSFKKMFDEGFDSAWGWPKFISLDTLYKQDKYSHYSDSFCLLIELTSQWG.

Positions 1-94 (MEIEPVVRIS…NNNSNSNGTD (94 aa)) are disordered. A compositionally biased stretch (low complexity) spans 12–47 (NGNNNQNNNNNNNNNTNNNSNNNNNNNNSSNINSTN). The span at 58–72 (KMISNINNQKSPNPL) shows a compositional bias: polar residues. Positions 73 to 91 (NSSVDDNNNTNNNNNSNSN) are enriched in low complexity. Residues 122-189 (SDVIFKVGDR…ICIGILDLDY (68 aa)) enclose the BTB domain. The disordered stretch occupies residues 311–455 (IQQQQQQQQQ…DSANDDYEYS (145 aa)). Residues 312–331 (QQQQQQQQQQLQSANGASGK) are compositionally biased toward low complexity. Residues 332–344 (SHGKRSSSSHLKK) show a composition bias toward basic residues. Residues 353-363 (GSCSSRCSSRR) show a composition bias toward low complexity. Residues 416–453 (DDFENDSEDGDDDDEDDDEDDDFTDDDDKDDSANDDYE) are compositionally biased toward acidic residues.

As to expression, expressed strongly in presumptive spore (prespore or psp) cells during the late G2 phase of cell cycle. Present at a low level in vegetative cells.

Required for normal morphogenesis and cell-type stability. This is Trishanku (triA) from Dictyostelium discoideum (Social amoeba).